The primary structure comprises 430 residues: RNA pseudouridine synthase 2, chloroplastic (430 aa).

Residues 1 to 43 constitute a chloroplast transit peptide; it reads MLSISQLPSFSLTTAKSLRYPSSPSSSLSIFFSFFPKVSNFVR. The S4 RNA-binding domain occupies 82–155; that stretch reads IRLDSWISSR…IPLDIVYEDK (74 aa). Residues 195–222 are disordered; it reads SNSEEDDDSDEETFSDDEEMTTSPSSYA. Acidic residues predominate over residues 196–214; the sequence is NSEEDDDSDEETFSDDEEM. Asp234 is a catalytic residue.

The protein belongs to the pseudouridine synthase RluA family.

It localises to the plastid. The protein resides in the chloroplast. The enzyme catalyses a uridine in RNA = a pseudouridine in RNA. The chain is RNA pseudouridine synthase 2, chloroplastic from Arabidopsis thaliana (Mouse-ear cress).